The chain runs to 180 residues: Cell division protein ZapC (180 aa).

It belongs to the ZapC family. Interacts directly with FtsZ.

It localises to the cytoplasm. In terms of biological role, contributes to the efficiency of the cell division process by stabilizing the polymeric form of the cell division protein FtsZ. Acts by promoting interactions between FtsZ protofilaments and suppressing the GTPase activity of FtsZ. This chain is Cell division protein ZapC, found in Vibrio cholerae serotype O1 (strain ATCC 39315 / El Tor Inaba N16961).